The following is a 449-amino-acid chain: Guanine/hypoxanthine permease GhxP (449 aa).

Residues 1-25 (MSTPSARTGGSLDAWFKISQRGSTV) are Cytoplasmic-facing. A helical transmembrane segment spans residues 26 to 49 (RQEVVAGLTTFLAMVYSVIVVPGM). Topologically, residues 50–59 (LGKAGFPPAA) are periplasmic. Residues 60–78 (VFVATCLVAGLGSIVMGLW) traverse the membrane as a helical segment. Residues 79-80 (AN) are Cytoplasmic-facing. Residues 81-97 (LPLAIGCAISLTAFTAF) form a discontinuously helical membrane-spanning segment. Over 98–109 (SLVLGQHISVPV) the chain is Periplasmic. A helical transmembrane segment spans residues 110-129 (ALGAVFLMGVLFTVISATGI). The Cytoplasmic portion of the chain corresponds to 130–141 (RSWILRNLPHGV). Residues 142-162 (AHGTGIGIGLFLLLIAANGVG) traverse the membrane as a helical segment. At 163-180 (LVIKNPLDGLPVALGDFA) the chain is on the periplasmic side. Residues 181–198 (TFPVIMSLVGLAVIIGLE) form a helical membrane-spanning segment. Topologically, residues 199 to 202 (KLKV) are cytoplasmic. Residues 203-222 (PGGILLTIIGISIVGLIFDP) form a helical membrane-spanning segment. Topologically, residues 223–254 (NVHFSGVFAMPSLSDENGNSLIGSLDIMGALN) are periplasmic. Residues 255-283 (PVVLPSVLALVMTAVFDATGTIRAVAGQA) traverse the membrane as a helical segment. Residues 284–296 (NLLDKDGQIIDGG) lie on the Cytoplasmic side of the membrane. The helical transmembrane segment at 297 to 312 (KALTTDSMSSVFSGLV) threads the bilayer. Over 313–314 (GA) the chain is Periplasmic. Residues 315-330 (APAAVYIESAAGTAAG) traverse the membrane as a discontinuously helical segment. Over 331–334 (GKTG) the chain is Cytoplasmic. A helical transmembrane segment spans residues 335–349 (LTAITVGVLFLLILF). Residues 350–360 (LSPLSYLVPGY) lie on the Periplasmic side of the membrane. The helical transmembrane segment at 361-380 (ATAPALMYVGLLMLSNVAKI) threads the bilayer. Over 381 to 385 (DFADF) the chain is Cytoplasmic. Residues 386–421 (VDAMAGLVTAVFIVLTCNIVTGIMIGFATLVIGRLV) constitute an intramembrane region (discontinuously helical). At 422–449 (SGEWRKLNIGTVVIAVALVTFYAGGWAI) the chain is on the cytoplasmic side.

The protein belongs to the nucleobase:cation symporter-2 (NCS2) (TC 2.A.40) family. Azg-like subfamily.

Its subcellular location is the cell inner membrane. Functionally, high-affinity transporter for guanine and hypoxanthine. In Escherichia coli O157:H7, this protein is Guanine/hypoxanthine permease GhxP (ghxP).